Consider the following 65-residue polypeptide: Subtilisin inhibitor CLSI-I (65 aa).

Belongs to the protease inhibitor I13 (potato type I serine protease inhibitor) family.

Functionally, inhibits subtilisin-type microbial serine proteases including proteinase K, subtilisin BPN', subtilisin Carlsberg, subtilisin E, A.oryzae protease and S.griseus alkaline protease. Weakly inhibits pronase E. Does not inhibit trypsin or chymotrypsin. This Canavalia lineata (Beach bean) protein is Subtilisin inhibitor CLSI-I.